Reading from the N-terminus, the 364-residue chain is MSKERNNLLIAASGTGGHIFPALAVSKEVEKYWNMHWLGVEKRLDSKFVPRKYNLLTLNLETPQKSIFILFQYLKILYSTFNIIKILKEKKINLVFTTGGFISAPTILAAKLLNIPVIIHESNLIPGTVTKYFGFLCEFVLIGFKDTNAYLKNCKTIFTGTPLRPEFYKTNPLPEWVPRGKGPLLIVMGGSQGAKRINEIFYESLDLLIKQNFRIVHIVGEHNINIPRKIKSNNYVQKKFTNQIASLMQNCDLVISRSGAGTINELIQTKKPSILVPYPNSKNNHQEKNAIILSSIGGAILINQDKISKVFFQETLKRIFKVKKNKGKPTYEILDLMKENMKNLTSLKSTNKIKNLINYFLKEF.

Residues 15-17, Asn123, Arg164, Ser191, and Gln286 each bind UDP-N-acetyl-alpha-D-glucosamine; that span reads TGG.

The protein belongs to the glycosyltransferase 28 family. MurG subfamily.

The protein localises to the cell inner membrane. The enzyme catalyses di-trans,octa-cis-undecaprenyl diphospho-N-acetyl-alpha-D-muramoyl-L-alanyl-D-glutamyl-meso-2,6-diaminopimeloyl-D-alanyl-D-alanine + UDP-N-acetyl-alpha-D-glucosamine = di-trans,octa-cis-undecaprenyl diphospho-[N-acetyl-alpha-D-glucosaminyl-(1-&gt;4)]-N-acetyl-alpha-D-muramoyl-L-alanyl-D-glutamyl-meso-2,6-diaminopimeloyl-D-alanyl-D-alanine + UDP + H(+). Its pathway is cell wall biogenesis; peptidoglycan biosynthesis. In terms of biological role, cell wall formation. Catalyzes the transfer of a GlcNAc subunit on undecaprenyl-pyrophosphoryl-MurNAc-pentapeptide (lipid intermediate I) to form undecaprenyl-pyrophosphoryl-MurNAc-(pentapeptide)GlcNAc (lipid intermediate II). This is UDP-N-acetylglucosamine--N-acetylmuramyl-(pentapeptide) pyrophosphoryl-undecaprenol N-acetylglucosamine transferase from Prochlorococcus marinus (strain MIT 9515).